Reading from the N-terminus, the 473-residue chain is Fumarate hydratase class II (473 aa).

Residues 104–106 (SGT), 128–131 (HPND), 138–140 (SSN), and T186 each bind substrate. H187 functions as the Proton donor/acceptor in the catalytic mechanism. S318 is a catalytic residue. Substrate contacts are provided by residues S319 and 324 to 326 (KVN).

Belongs to the class-II fumarase/aspartase family. Fumarase subfamily. As to quaternary structure, homotetramer.

It localises to the cytoplasm. The catalysed reaction is (S)-malate = fumarate + H2O. Its pathway is carbohydrate metabolism; tricarboxylic acid cycle; (S)-malate from fumarate: step 1/1. Its function is as follows. Involved in the TCA cycle. Catalyzes the stereospecific interconversion of fumarate to L-malate. The chain is Fumarate hydratase class II from Corynebacterium glutamicum (strain ATCC 13032 / DSM 20300 / JCM 1318 / BCRC 11384 / CCUG 27702 / LMG 3730 / NBRC 12168 / NCIMB 10025 / NRRL B-2784 / 534).